Reading from the N-terminus, the 670-residue chain is Penicillin-binding protein activator LpoA (670 aa).

Residues 1–26 (MLPSKVVHRKAVRTVPLLLAALIFAG) form the signal peptide. C27 is lipidated: N-palmitoyl cysteine. C27 carries the S-diacylglycerol cysteine lipid modification.

This sequence belongs to the LpoA family. In terms of assembly, interacts with PBP1a.

The protein localises to the cell outer membrane. Its function is as follows. Regulator of peptidoglycan synthesis that is essential for the function of penicillin-binding protein 1A (PBP1a). The polypeptide is Penicillin-binding protein activator LpoA (Erwinia tasmaniensis (strain DSM 17950 / CFBP 7177 / CIP 109463 / NCPPB 4357 / Et1/99)).